The primary structure comprises 492 residues: Cell division protein FtsA (492 aa).

2 disordered regions span residues 288 to 307 (GEETPSQNVQIPTTGSDGHE) and 429 to 458 (YTRTAHQSSPTPHIHSSPTERNLSDLKAPS). Over residues 291-303 (TPSQNVQIPTTGS) the composition is skewed to polar residues. Residues 436-447 (SSPTPHIHSSPT) show a composition bias toward low complexity.

It belongs to the FtsA/MreB family. In terms of assembly, self-interacts. Interacts with FtsZ.

The protein localises to the cell inner membrane. In terms of biological role, cell division protein that is involved in the assembly of the Z ring. May serve as a membrane anchor for the Z ring. In Helicobacter pylori (strain ATCC 700392 / 26695) (Campylobacter pylori), this protein is Cell division protein FtsA.